The primary structure comprises 171 residues: Adenine phosphoribosyltransferase (171 aa).

It belongs to the purine/pyrimidine phosphoribosyltransferase family. Homodimer.

The protein localises to the cytoplasm. It catalyses the reaction AMP + diphosphate = 5-phospho-alpha-D-ribose 1-diphosphate + adenine. Its pathway is purine metabolism; AMP biosynthesis via salvage pathway; AMP from adenine: step 1/1. Its function is as follows. Catalyzes a salvage reaction resulting in the formation of AMP, that is energically less costly than de novo synthesis. This chain is Adenine phosphoribosyltransferase, found in Mesomycoplasma hyopneumoniae (strain 232) (Mycoplasma hyopneumoniae).